The following is a 384-amino-acid chain: Lipid-A-disaccharide synthase (384 aa).

It belongs to the LpxB family.

The catalysed reaction is a lipid X + a UDP-2-N,3-O-bis[(3R)-3-hydroxyacyl]-alpha-D-glucosamine = a lipid A disaccharide + UDP + H(+). The protein operates within bacterial outer membrane biogenesis; LPS lipid A biosynthesis. Functionally, condensation of UDP-2,3-diacylglucosamine and 2,3-diacylglucosamine-1-phosphate to form lipid A disaccharide, a precursor of lipid A, a phosphorylated glycolipid that anchors the lipopolysaccharide to the outer membrane of the cell. The chain is Lipid-A-disaccharide synthase from Gloeothece citriformis (strain PCC 7424) (Cyanothece sp. (strain PCC 7424)).